Here is a 460-residue protein sequence, read N- to C-terminus: Cation efflux system protein CusC (460 aa).

Residues 1–17 form the signal peptide; it reads MSPCKLLPFCVALALTG. Cysteine 18 is lipidated: N-palmitoyl cysteine. The S-diacylglycerol cysteine moiety is linked to residue cysteine 18.

It belongs to the outer membrane factor (OMF) (TC 1.B.17) family. As to quaternary structure, homotrimer. Component of the cus efflux system composed of CusA, CusB, CusC and CusF.

The protein localises to the cell outer membrane. Forms pores that allow passive diffusion of cations across the outer membrane. Part of a cation efflux system that mediates resistance to copper and silver. This is Cation efflux system protein CusC (cusC) from Escherichia coli O157:H7.